The sequence spans 531 residues: Probable cytochrome P450 4e1 (531 aa).

Heme contacts are provided by E307 and C444.

This sequence belongs to the cytochrome P450 family. It depends on heme as a cofactor.

The protein localises to the endoplasmic reticulum membrane. Its subcellular location is the microsome membrane. May be involved in the metabolism of insect hormones and in the breakdown of synthetic insecticides. This is Probable cytochrome P450 4e1 (Cyp4e1) from Drosophila melanogaster (Fruit fly).